Consider the following 380-residue polypeptide: Cytochrome b (380 aa).

4 helical membrane passes run 34–54 (FGSL…LLAM), 78–99 (WLIR…YLHI), 114–134 (WNTG…GYVL), and 179–199 (FFAL…IHLT). Heme b-binding residues include H84 and H98. The heme b site is built by H183 and H197. H202 is an a ubiquinone binding site. 4 helical membrane-spanning segments follow: residues 227–247 (LKDI…ALFS), 289–309 (LGGV…PFLH), 321–341 (LSQL…WVGS), and 348–368 (FIII…ILFP).

This sequence belongs to the cytochrome b family. In terms of assembly, the cytochrome bc1 complex contains 11 subunits: 3 respiratory subunits (MT-CYB, CYC1 and UQCRFS1), 2 core proteins (UQCRC1 and UQCRC2) and 6 low-molecular weight proteins (UQCRH/QCR6, UQCRB/QCR7, UQCRQ/QCR8, UQCR10/QCR9, UQCR11/QCR10 and a cleavage product of UQCRFS1). This cytochrome bc1 complex then forms a dimer. Heme b is required as a cofactor.

It is found in the mitochondrion inner membrane. In terms of biological role, component of the ubiquinol-cytochrome c reductase complex (complex III or cytochrome b-c1 complex) that is part of the mitochondrial respiratory chain. The b-c1 complex mediates electron transfer from ubiquinol to cytochrome c. Contributes to the generation of a proton gradient across the mitochondrial membrane that is then used for ATP synthesis. This chain is Cytochrome b (MT-CYB), found in Ardenna tenuirostris (Short-tailed shearwater).